A 149-amino-acid polypeptide reads, in one-letter code: Glutamate mutase sigma subunit (149 aa).

One can recognise a B12-binding domain in the interval 3–140; that stretch reads KATLVIGVIG…AHDINQRHDV (138 aa). Residues 13 to 17, His16, 61 to 63, and 93 to 97 contribute to the adenosylcob(III)alamin site; these read ADCHA, SSI, and NLVVG.

Belongs to the methylaspartate mutase GlmS subunit family. Heterotetramer composed of 2 epsilon subunits (GlmE) and 2 sigma subunits (GlmS). GlmE exists as a homodimer and GlmS as a monomer. Requires adenosylcob(III)alamin as cofactor.

It carries out the reaction (2S,3S)-3-methyl-L-aspartate = L-glutamate. It functions in the pathway amino-acid degradation; L-glutamate degradation via mesaconate pathway; acetate and pyruvate from L-glutamate: step 1/4. In terms of biological role, catalyzes the carbon skeleton rearrangement of L-glutamate to L-threo-3-methylaspartate ((2S,3S)-3-methylaspartate). This Escherichia coli O157:H7 protein is Glutamate mutase sigma subunit.